The sequence spans 339 residues: Replication factor C subunit 2 (339 aa).

Position 48 to 55 (48 to 55 (YGPPGTGK)) interacts with ATP.

It belongs to the activator 1 small subunits family. As to quaternary structure, heterotetramer of subunits RFC2, RFC3, RFC4 and RFC5 that can form a complex with RFC1. In terms of tissue distribution, expressed in roots, leaves, shoot apical meristem (SAM), flag leaves and panicles.

The protein localises to the nucleus. May be involved in DNA replication and thus regulate cell proliferation. The protein is Replication factor C subunit 2 (RFC2) of Oryza sativa subsp. japonica (Rice).